We begin with the raw amino-acid sequence, 484 residues long: ATP-dependent rRNA helicase RRP3 (484 aa).

Low complexity-rich tracts occupy residues 1–14 (MPSPSPEASSSMSQ) and 22–34 (PSPASSNPDAPEA). Positions 1-38 (MPSPSPEASSSMSQPGPPSRSPSPASSNPDAPEASHNK) are disordered. A Q motif motif is present at residues 38–66 (KTFADLGISPELCRACASMGFKKPSDIQA). The Helicase ATP-binding domain occupies 69 to 240 (IPHALEGKDI…RASLNKPVRV (172 aa)). ATP is bound at residue 82 to 89 (AQTGSGKT). The DEAD box motif lies at 188-191 (DEAD). Residues 263-411 (NKDAYLLYLA…SFDVDKEAVA (149 aa)) form the Helicase C-terminal domain. The segment at 425 to 484 (ALEMRESGTGGGGGKRGRDKGKRKTFGDGDDRDRDDDVVEAGVPRKKNKFTPGGKKKARK) is disordered. Composition is skewed to basic residues over residues 439-448 (KRGRDKGKRK) and 468-484 (PRKKNKFTPGGKKKARK).

It belongs to the DEAD box helicase family. DDX47/RRP3 subfamily. Interacts with the SSU processome.

It localises to the nucleus. The catalysed reaction is ATP + H2O = ADP + phosphate + H(+). ATP-dependent rRNA helicase required for pre-ribosomal RNA processing. Involved in the maturation of the 35S-pre-rRNA and to its cleavage to mature 18S rRNA. The sequence is that of ATP-dependent rRNA helicase RRP3 from Cryptococcus neoformans var. neoformans serotype D (strain B-3501A) (Filobasidiella neoformans).